The chain runs to 238 residues: Large ribosomal subunit protein uL2 (238 aa).

The disordered stretch occupies residues 199-238; it reads PHGGGLHQSVSRPSTVSRNAPPGRKVGHIAARRTGRKEGA. A compositionally biased stretch (polar residues) spans 206–216; the sequence is QSVSRPSTVSR. Positions 223-238 are enriched in basic residues; sequence KVGHIAARRTGRKEGA.

Belongs to the universal ribosomal protein uL2 family. In terms of assembly, part of the 50S ribosomal subunit. Forms a bridge to the 30S subunit in the 70S ribosome.

In terms of biological role, one of the primary rRNA binding proteins. Required for association of the 30S and 50S subunits to form the 70S ribosome, for tRNA binding and peptide bond formation. It has been suggested to have peptidyltransferase activity; this is somewhat controversial. Makes several contacts with the 16S rRNA in the 70S ribosome. The chain is Large ribosomal subunit protein uL2 from Sulfurisphaera tokodaii (strain DSM 16993 / JCM 10545 / NBRC 100140 / 7) (Sulfolobus tokodaii).